The chain runs to 464 residues: Synaptosomal-associated protein 47 (464 aa).

A disordered region spans residues 20–42 (GRLWDSSGVPQRQKRPGPWRTQT). T-SNARE coiled-coil homology domains lie at 154–216 (VADA…LTEL) and 401–463 (TSLP…MKRL).

It belongs to the SVAP1 family. In terms of assembly, forms a complex containing SNAP47, VAMP2 and STX1A. Associates with the BLOC-1 complex. Interacts with BLOC1S6.

The protein resides in the endomembrane system. It localises to the cytoplasm. The protein localises to the perinuclear region. Its function is as follows. Plays a role in intracellular membrane fusion. This is Synaptosomal-associated protein 47 (SNAP47) from Homo sapiens (Human).